Consider the following 1036-residue polypeptide: Integrin alpha-9 (1036 aa).

Positions 1–28 (MGGPAAARTGAGGLRALLLALVAAGVPA) are cleaved as a signal peptide. The Extracellular segment spans residues 29–981 (GAYNLDAQRP…NLEPRGYVVG (953 aa)). FG-GAP repeat units lie at residues 36 to 97 (QRPV…PDRR), 109 to 175 (RGAP…AKGK), 183 to 233 (EYKK…NTYF), 234 to 290 (KLND…SGTL), 291 to 350 (IKIF…GALE), 352 to 409 (QLTL…GIVP), and 412 to 475 (SMKL…LPGS). 3 cysteine pairs are disulfide-bonded: Cys88/Cys98, Cys143/Cys163, and Cys180/Cys195. Asn226 carries an N-linked (GlcNAc...) asparagine glycan. Positions 313, 315, 317, 321, 374, 376, 378, 382, 436, 438, 440, and 444 each coordinate Ca(2+). An intrachain disulfide couples Cys483 to Cys492. N-linked (GlcNAc...) asparagine glycans are attached at residues Asn494 and Asn515. 3 cysteine pairs are disulfide-bonded: Cys498/Cys556, Cys621/Cys626, and Cys697/Cys707. Residue Asn808 is glycosylated (N-linked (GlcNAc...) asparagine). 2 disulfides stabilise this stretch: Cys856–Cys892 and Cys899–Cys904. Residues 982 to 1002 (WIIAISLLVGILIFLLLAVLL) traverse the membrane as a helical segment. Topologically, residues 1003-1036 (WKMGFFRRRYKEIIEAEKNRKENEDGWDWVQKNQ) are cytoplasmic. The GFFKR motif signature appears at 1006 to 1010 (GFFRR).

Belongs to the integrin alpha chain family. Heterodimer of an alpha and a beta subunit. Alpha-9 (ITGA9) associates with beta-1 (ITGB1). Integrin ITGA9:ITGB1 interacts with FBLN5 (via N-terminus). Integrin ITGA9:ITGB1 interacts with SPP1/OPN (via N-terminus). Integrin ITGA9:ITGB1 interacts with TNC/TNFN3 (via the 3rd Fibronectin type-III domain). Integrin ITGA9:ITGB1 interacts with SVEP1/polydom (via Sushi domain 21); thereby inhibits Ca(2+) intracellular signaling and as a result represses vasocontraction. In terms of tissue distribution, expressed in the media layer of the arterial wall (at protein level). Expressed in the airway epithelium, skeletal muscle, basal keratincytes, the basal epithelium of the cornea, hepatocytes, giant cells in the spleen and smooth muscle of the stomach, duodenum and veins (at protein level).

Its subcellular location is the membrane. In terms of biological role, integrin alpha-9/beta-1 (ITGA9:ITGB1) is a receptor for VCAM1, cytotactin and osteopontin. It recognizes the sequence A-E-I-D-G-I-E-L in cytotactin. ITGA9:ITGB1 may play a crucial role in SVEP1/polydom-mediated myoblast cell adhesion. Integrin ITGA9:ITGB1 represses PRKCA-mediated L-type voltage-gated channel Ca(2+) influx and ROCK-mediated calcium sensitivity in vascular smooth muscle cells via its interaction with SVEP1, thereby inhibiting vasocontraction. The protein is Integrin alpha-9 of Mus musculus (Mouse).